A 142-amino-acid polypeptide reads, in one-letter code: Large ribosomal subunit protein uL13 (142 aa).

Belongs to the universal ribosomal protein uL13 family. Part of the 50S ribosomal subunit.

Its function is as follows. This protein is one of the early assembly proteins of the 50S ribosomal subunit, although it is not seen to bind rRNA by itself. It is important during the early stages of 50S assembly. The chain is Large ribosomal subunit protein uL13 from Actinobacillus succinogenes (strain ATCC 55618 / DSM 22257 / CCUG 43843 / 130Z).